Reading from the N-terminus, the 614-residue chain is DNA mismatch repair protein MutL (614 aa).

Residues 355-411 are disordered; sequence PLSTGRVSEADPSNYATQSKFDEKPRESGSQGQSSSISAPSSYSRGGEYSARSQPEL. The segment covering 382-401 has biased composition (low complexity); that stretch reads SGSQGQSSSISAPSSYSRGG.

It belongs to the DNA mismatch repair MutL/HexB family.

Its function is as follows. This protein is involved in the repair of mismatches in DNA. It is required for dam-dependent methyl-directed DNA mismatch repair. May act as a 'molecular matchmaker', a protein that promotes the formation of a stable complex between two or more DNA-binding proteins in an ATP-dependent manner without itself being part of a final effector complex. The polypeptide is DNA mismatch repair protein MutL (Shewanella woodyi (strain ATCC 51908 / MS32)).